We begin with the raw amino-acid sequence, 1071 residues long: DNA-directed RNA polymerase subunit beta (1071 aa).

This sequence belongs to the RNA polymerase beta chain family. In plastids the minimal PEP RNA polymerase catalytic core is composed of four subunits: alpha, beta, beta', and beta''. When a (nuclear-encoded) sigma factor is associated with the core the holoenzyme is formed, which can initiate transcription.

It is found in the plastid. The protein localises to the chloroplast. The catalysed reaction is RNA(n) + a ribonucleoside 5'-triphosphate = RNA(n+1) + diphosphate. DNA-dependent RNA polymerase catalyzes the transcription of DNA into RNA using the four ribonucleoside triphosphates as substrates. The protein is DNA-directed RNA polymerase subunit beta of Acorus calamus (Sweet flag).